A 159-amino-acid chain; its full sequence is Protransforming growth factor alpha (159 aa).

Positions 1–23 (MVPAAGQLALLALGILVAVCQAL) are cleaved as a signal peptide. Residues 24 to 38 (ENSTSPLSDSPVAAA) constitute a propeptide, removed in mature form. The Extracellular segment spans residues 24–97 (ENSTSPLSDS…AVVAASQKKQ (74 aa)). Asparagine 25 is a glycosylation site (N-linked (GlcNAc...) asparagine). The EGF-like domain occupies 42 to 82 (HFNKCPDSHTQYCFHGTCRFLVQEEKPACVCHSGYVGVRCE). Cystine bridges form between cysteine 46-cysteine 59, cysteine 54-cysteine 70, and cysteine 72-cysteine 81. A propeptide spans 89-159 (VVAASQKKQA…TACCHSETVV (71 aa)) (removed in mature form). A helical membrane pass occupies residues 98-123 (AITALVVVSIVALAVLIITCVLIHCC). Residues 124 to 159 (QVRKHCEWCRALVCRHEKPSALLKGRTACCHSETVV) lie on the Cytoplasmic side of the membrane. 2 S-palmitoyl cysteine lipidation sites follow: cysteine 152 and cysteine 153.

Interacts with the PDZ domains of MAGI3, SDCBP and SNTA1. The interaction with SDCBP, is required for the targeting to the cell surface. In the endoplasmic reticulum, in its immature form (i.e. with a prosegment and lacking full N-glycosylation), interacts with CNIH. In the Golgi apparatus, may form a complex with CNIH and GORASP2. Interacts (via cytoplasmic C-terminal domain) with NKD2.

Its subcellular location is the secreted. The protein resides in the extracellular space. The protein localises to the cell membrane. In terms of biological role, TGF alpha is a mitogenic polypeptide that is able to bind to the EGF receptor/EGFR and to act synergistically with TGF beta to promote anchorage-independent cell proliferation in soft agar. In Rattus norvegicus (Rat), this protein is Protransforming growth factor alpha (Tgfa).